A 264-amino-acid polypeptide reads, in one-letter code: ATP synthase subunit a (264 aa).

6 helical membrane-spanning segments follow: residues 29 to 49 (TWHI…LWIF), 87 to 107 (NALI…MNFM), 134 to 154 (DLNI…YYSI), 177 to 197 (IPVN…SLAL), 208 to 228 (LIFI…SLGV), and 235 to 255 (LIFH…LTIV).

Belongs to the ATPase A chain family. In terms of assembly, F-type ATPases have 2 components, CF(1) - the catalytic core - and CF(0) - the membrane proton channel. CF(1) has five subunits: alpha(3), beta(3), gamma(1), delta(1), epsilon(1). CF(0) has three main subunits: a(1), b(2) and c(9-12). The alpha and beta chains form an alternating ring which encloses part of the gamma chain. CF(1) is attached to CF(0) by a central stalk formed by the gamma and epsilon chains, while a peripheral stalk is formed by the delta and b chains.

The protein localises to the cell inner membrane. Its function is as follows. Key component of the proton channel; it plays a direct role in the translocation of protons across the membrane. This chain is ATP synthase subunit a, found in Shewanella amazonensis (strain ATCC BAA-1098 / SB2B).